Here is a 399-residue protein sequence, read N- to C-terminus: Secreted RxLR effector protein 36 (399 aa).

The signal sequence occupies residues M1 to A21. The RxLR-dEER motif lies at R50–R71. N-linked (GlcNAc...) asparagine glycosylation occurs at N75. Residues I126–D145 form a disordered region.

It belongs to the RxLR effector family.

Its subcellular location is the secreted. It is found in the host nucleus. Functionally, secreted effector that completely suppresses the host cell death induced by cell death-inducing proteins. The chain is Secreted RxLR effector protein 36 from Plasmopara viticola (Downy mildew of grapevine).